The following is a 289-amino-acid chain: ATP synthase subunit a (289 aa).

The next 6 helical transmembrane spans lie at 43 to 63 (AFHV…VLIF), 101 to 121 (SAVI…MNAV), 160 to 180 (LSVF…GGFI), 193 to 213 (LFVQ…TLIA), 232 to 252 (VFIL…GLGV), and 259 to 279 (AVFH…LTIV).

The protein belongs to the ATPase A chain family. As to quaternary structure, F-type ATPases have 2 components, CF(1) - the catalytic core - and CF(0) - the membrane proton channel. CF(1) has five subunits: alpha(3), beta(3), gamma(1), delta(1), epsilon(1). CF(0) has three main subunits: a(1), b(2) and c(9-12). The alpha and beta chains form an alternating ring which encloses part of the gamma chain. CF(1) is attached to CF(0) by a central stalk formed by the gamma and epsilon chains, while a peripheral stalk is formed by the delta and b chains.

The protein localises to the cell inner membrane. Functionally, key component of the proton channel; it plays a direct role in the translocation of protons across the membrane. The polypeptide is ATP synthase subunit a (Pseudomonas savastanoi pv. phaseolicola (strain 1448A / Race 6) (Pseudomonas syringae pv. phaseolicola (strain 1448A / Race 6))).